A 77-amino-acid polypeptide reads, in one-letter code: Phytosulfokines 5 (77 aa).

The N-terminal stretch at 1–24 (MVKFTTFLCIIALLLCSTLTHASA) is a signal peptide. The propeptide occupies 25-68 (RLNPTSVYPEENSFKKLEQGEVICEGVGEEECFLIRRTLVAHTD). Residues Tyr69 and Tyr71 each carry the sulfotyrosine modification. The propeptide occupies 74 to 77 (NHNP).

This sequence belongs to the phytosulfokine family. Sulfation is important for activity and for the binding to a putative membrane receptor. Post-translationally, PSK-beta is an enzymatic derivative of PSK-alpha. In terms of tissue distribution, expressed in stems, roots, mature leaves and flowers. Most abundant in vascular bundles.

It localises to the secreted. Functionally, promotes plant cell differentiation, organogenesis and somatic embryogenesis as well as cell proliferation. May be involved in the low quiescent center cell proliferation. This is Phytosulfokines 5 (PSK5) from Arabidopsis thaliana (Mouse-ear cress).